Reading from the N-terminus, the 308-residue chain is MADRSMPVPDGLAGMRVDTGLARLLGLSRTAAAALAEEGAVELNGVPAGKSDRLVSGALLQVRLPEAPAPLQNTPIDIEGMTILYSDDDIVAVDKPAAVAAHASVGWTGPTVLGGLAAAGYRITTSGVHERQGIVHRLDVGTSGVMVVAISERAYTVLKRAFKYRTVDKRYHALVQGHPDPSSGTIDAPIGRHRGHEWKFAITKNGRHSLTHYDTLEAFVAASLLDVHLETGRTHQIRVHFAALHHPCCGDLVYGADPKLAKRLGLDRQWLHARSLAFAHPADGRRVEIVSPYPADLQHALKILRGEG.

The S4 RNA-binding domain maps to 15–81 (MRVDTGLARL…QNTPIDIEGM (67 aa)). The active site involves aspartate 139.

This sequence belongs to the pseudouridine synthase RluA family.

It carries out the reaction a uridine in RNA = a pseudouridine in RNA. This is an uncharacterized protein from Mycobacterium tuberculosis (strain CDC 1551 / Oshkosh).